Reading from the N-terminus, the 173-residue chain is MCTNIVYEWLKALQLPQYAESFVDNGYDDLEVCKQIGDPDLDAIGVLAPAHRRRILEAVRRLREQDANAAGLYFTLEPQPAPPGPPADAVPTGRRGEPCGGPAQGTRGDSRGHTTAPRSRELVSYPKLKLKIMIRDKLVRDGIHLSKPPYSRKVPMAGILEYLMNWPKSSQSR.

Residues 1–65 (MCTNIVYEWL…LEAVRRLREQ (65 aa)) form the SAM domain. The interval 75–119 (TLEPQPAPPGPPADAVPTGRRGEPCGGPAQGTRGDSRGHTTAPRS) is disordered. The segment covering 79–88 (QPAPPGPPAD) has biased composition (pro residues).

As to quaternary structure, interacts promiscuously (via SAM domain) with EPHA5, EPHA6, EPHA7, EPHA8, EPHB1, EPHB2, EPHB3 and EPHB4 (via SAM domain) (in vitro). Detected in biliary epithelial cells on bile ducts at the hepatic hilum (at protein level).

The protein resides in the cytoplasm. The sequence is that of Sterile alpha motif domain-containing protein 5 (SAMD5) from Homo sapiens (Human).